We begin with the raw amino-acid sequence, 248 residues long: 3-deoxy-manno-octulosonate cytidylyltransferase (248 aa).

This sequence belongs to the KdsB family.

Its subcellular location is the cytoplasm. It carries out the reaction 3-deoxy-alpha-D-manno-oct-2-ulosonate + CTP = CMP-3-deoxy-beta-D-manno-octulosonate + diphosphate. The protein operates within nucleotide-sugar biosynthesis; CMP-3-deoxy-D-manno-octulosonate biosynthesis; CMP-3-deoxy-D-manno-octulosonate from 3-deoxy-D-manno-octulosonate and CTP: step 1/1. It participates in bacterial outer membrane biogenesis; lipopolysaccharide biosynthesis. In terms of biological role, activates KDO (a required 8-carbon sugar) for incorporation into bacterial lipopolysaccharide in Gram-negative bacteria. In Chlorobaculum tepidum (strain ATCC 49652 / DSM 12025 / NBRC 103806 / TLS) (Chlorobium tepidum), this protein is 3-deoxy-manno-octulosonate cytidylyltransferase.